Reading from the N-terminus, the 349-residue chain is S-adenosylmethionine:tRNA ribosyltransferase-isomerase (349 aa).

Belongs to the QueA family. Monomer.

It localises to the cytoplasm. It carries out the reaction 7-aminomethyl-7-carbaguanosine(34) in tRNA + S-adenosyl-L-methionine = epoxyqueuosine(34) in tRNA + adenine + L-methionine + 2 H(+). Its pathway is tRNA modification; tRNA-queuosine biosynthesis. Transfers and isomerizes the ribose moiety from AdoMet to the 7-aminomethyl group of 7-deazaguanine (preQ1-tRNA) to give epoxyqueuosine (oQ-tRNA). The chain is S-adenosylmethionine:tRNA ribosyltransferase-isomerase from Cupriavidus pinatubonensis (strain JMP 134 / LMG 1197) (Cupriavidus necator (strain JMP 134)).